Here is a 326-residue protein sequence, read N- to C-terminus: B3 domain-containing protein At5g60130 (326 aa).

The TF-B3 DNA-binding region spans 12–110 (PKFFKVYLPD…CFHFCIYEHR (99 aa)). The segment at 124–222 (EEIKVESDSD…DEDERQYLDD (99 aa)) is disordered. Over residues 143–199 (LSLDEDDDDSDYNCGEDNDSDDYADEAAVEKDDNDADDEDVDNVADDVPVEDDDYVE) the composition is skewed to acidic residues.

The protein localises to the nucleus. The polypeptide is B3 domain-containing protein At5g60130 (Arabidopsis thaliana (Mouse-ear cress)).